A 190-amino-acid chain; its full sequence is Myosin, light chain 1, alkali; skeletal, fast (190 aa).

The segment covering 1 to 17 (MAPKKDAKKPEPPKKAE) has biased composition (basic and acidic residues). Positions 1–33 (MAPKKDAKKPEPPKKAEPAPAPAPAPEPPKADA) are disordered. The segment covering 19-28 (APAPAPAPEP) has biased composition (pro residues). EF-hand domains follow at residues 46-81 (DQME…LGQN) and 123-158 (ATYD…LGEK).

In terms of assembly, myosin is a hexamer of 2 heavy chains and 4 light chains. Does not bind calcium. As to expression, expressed in fast muscle fibers during skeletal muscle differentiation.

Its function is as follows. Non-regulatory myosin light chain required for proper formation and/or maintenance of myofibers, and thus appropriate muscle function. In Danio rerio (Zebrafish), this protein is Myosin, light chain 1, alkali; skeletal, fast.